Consider the following 251-residue polypeptide: Probable transcriptional regulatory protein AAur_2300 (251 aa).

It belongs to the TACO1 family.

The protein localises to the cytoplasm. The sequence is that of Probable transcriptional regulatory protein AAur_2300 from Paenarthrobacter aurescens (strain TC1).